The chain runs to 580 residues: 3-(3-hydroxy-phenyl)propionate/3-hydroxycinnamic acid hydroxylase (580 aa).

Residues 14–43 (DVLV…VVEE) and 291–301 (FRRGRLLLAGD) contribute to the FAD site.

It belongs to the PheA/TfdB FAD monooxygenase family. FAD serves as cofactor.

The enzyme catalyses 3-(3-hydroxyphenyl)propanoate + NADH + O2 + H(+) = 3-(2,3-dihydroxyphenyl)propanoate + NAD(+) + H2O. It carries out the reaction (2E)-3-(3-hydroxyphenyl)prop-2-enoate + NADH + O2 + H(+) = (2E)-3-(2,3-dihydroxyphenyl)prop-2-enoate + NAD(+) + H2O. It functions in the pathway aromatic compound metabolism; 3-phenylpropanoate degradation. Functionally, catalyzes the insertion of one atom of molecular oxygen into position 2 of the phenyl ring of 3-(3-hydroxyphenyl)propionate (3-HPP) and hydroxycinnamic acid (3HCI). This is 3-(3-hydroxy-phenyl)propionate/3-hydroxycinnamic acid hydroxylase from Mycobacterium avium (strain 104).